The chain runs to 358 residues: Isopentenyl-diphosphate delta-isomerase (358 aa).

A substrate-binding site is contributed by 12–13 (RK). FMN-binding positions include 69–71 (AMT), serine 99, and asparagine 128. Glutamine 158 lines the substrate pocket. Mg(2+) is bound at residue glutamate 159. Residues lysine 190, threonine 220, 267-269 (GIR), and 288-289 (AG) contribute to the FMN site.

The protein belongs to the IPP isomerase type 2 family. In terms of assembly, homooctamer. Dimer of tetramers. FMN is required as a cofactor. Requires NADPH as cofactor. The cofactor is Mg(2+).

Its subcellular location is the cytoplasm. It carries out the reaction isopentenyl diphosphate = dimethylallyl diphosphate. Its function is as follows. Involved in the biosynthesis of isoprenoids. Catalyzes the 1,3-allylic rearrangement of the homoallylic substrate isopentenyl (IPP) to its allylic isomer, dimethylallyl diphosphate (DMAPP). The polypeptide is Isopentenyl-diphosphate delta-isomerase (Listeria welshimeri serovar 6b (strain ATCC 35897 / DSM 20650 / CCUG 15529 / CIP 8149 / NCTC 11857 / SLCC 5334 / V8)).